Here is a 340-residue protein sequence, read N- to C-terminus: NADH-quinone oxidoreductase subunit H (340 aa).

A run of 8 helical transmembrane segments spans residues 4-24 (TIGI…PLLI), 78-98 (YLFV…WAVI), 113-133 (VLYL…AGWA), 151-171 (VSYE…AGSM), 184-204 (MLHW…ISGI), 244-264 (SMIL…LSPF), 273-293 (IFFI…FLFV), and 316-336 (VLIP…VAHV).

It belongs to the complex I subunit 1 family. NDH-1 is composed of 14 different subunits. Subunits NuoA, H, J, K, L, M, N constitute the membrane sector of the complex.

It localises to the cell inner membrane. It catalyses the reaction a quinone + NADH + 5 H(+)(in) = a quinol + NAD(+) + 4 H(+)(out). Its function is as follows. NDH-1 shuttles electrons from NADH, via FMN and iron-sulfur (Fe-S) centers, to quinones in the respiratory chain. The immediate electron acceptor for the enzyme in this species is believed to be ubiquinone. Couples the redox reaction to proton translocation (for every two electrons transferred, four hydrogen ions are translocated across the cytoplasmic membrane), and thus conserves the redox energy in a proton gradient. This subunit may bind ubiquinone. The polypeptide is NADH-quinone oxidoreductase subunit H (Legionella pneumophila subsp. pneumophila (strain Philadelphia 1 / ATCC 33152 / DSM 7513)).